We begin with the raw amino-acid sequence, 163 residues long: MTADRPVTLAAIAGAHGVRGEVRLKLFGEGAETLRAFSVFDAGDRKLTLKSVRPANQGAVAAFVEIADRSAAEALRGTLLTVPRSALPPLGPGEYYHHDLIGLPCVSTEGAPVGHVAAVDNFGAGDILEIEKPDGKRFMVPMTVTAVPTWDAETVTVNAAFIE.

In terms of domain architecture, PRC barrel spans 92-161 (PGEYYHHDLI…AETVTVNAAF (70 aa)).

It belongs to the RimM family. As to quaternary structure, binds ribosomal protein uS19.

Its subcellular location is the cytoplasm. Its function is as follows. An accessory protein needed during the final step in the assembly of 30S ribosomal subunit, possibly for assembly of the head region. Essential for efficient processing of 16S rRNA. May be needed both before and after RbfA during the maturation of 16S rRNA. It has affinity for free ribosomal 30S subunits but not for 70S ribosomes. This is Ribosome maturation factor RimM from Sphingopyxis alaskensis (strain DSM 13593 / LMG 18877 / RB2256) (Sphingomonas alaskensis).